A 1122-amino-acid polypeptide reads, in one-letter code: DNA polymerase (1122 aa).

This sequence belongs to the DNA polymerase type-B family. As to quaternary structure, heterodimer with the terminal protein; this heterodimer binds to bp 9 to 18 of the genome. Forms a complex with viral pTP, DBP and hosts NFIA and POU2F1/OCT1 for initiation of replication.

It is found in the host nucleus. It catalyses the reaction DNA(n) + a 2'-deoxyribonucleoside 5'-triphosphate = DNA(n+1) + diphosphate. Its function is as follows. Eukaryotic-type DNA polymerase involved in viral genomic replication. DNA synthesis is protein primed, and acts in a strand displacement replication. Assembles in complex with viral pTP, DBP, host NFIA and host POU2F1/OCT1 on viral origin of replication. The polymerase covalently transfers dCMP onto pTP, thereby initiating complementary strand synthesis. The protein is DNA polymerase of Human adenovirus B serotype 7 (HAdV-7).